The following is a 319-amino-acid chain: Aliphatic sulfonates import ATP-binding protein SsuB 1 (319 aa).

Residues 63–282 (VTLSGVSKRF…ARASAAFAAL (220 aa)) form the ABC transporter domain. 95-102 (GRSGCGKS) is a binding site for ATP.

The protein belongs to the ABC transporter superfamily. Aliphatic sulfonates importer (TC 3.A.1.17.2) family. The complex is composed of two ATP-binding proteins (SsuB), two transmembrane proteins (SsuC) and a solute-binding protein (SsuA).

The protein resides in the cell inner membrane. The catalysed reaction is ATP + H2O + aliphatic sulfonate-[sulfonate-binding protein]Side 1 = ADP + phosphate + aliphatic sulfonateSide 2 + [sulfonate-binding protein]Side 1.. In terms of biological role, part of the ABC transporter complex SsuABC involved in aliphatic sulfonates import. Responsible for energy coupling to the transport system. The chain is Aliphatic sulfonates import ATP-binding protein SsuB 1 from Burkholderia cenocepacia (strain HI2424).